The following is a 541-amino-acid chain: Putative ammonium transporter sll0537 (541 aa).

A run of 11 helical transmembrane segments spans residues 6 to 26 (TLWL…FMCL), 44 to 64 (FADF…IMFG), 86 to 106 (LAVF…IISG), 117 to 137 (YLLV…DWAW), 161 to 181 (FAGS…TILV), 203 to 223 (MPFS…FNGG), 235 to 255 (IMVN…LISL), 260 to 280 (MIQV…ITAS), 283 to 303 (VVMT…AYLV), 316 to 336 (VDAV…VGLF), and 356 to 376 (LLGI…FLTL).

The protein belongs to the ammonia transporter channel (TC 1.A.11.2) family.

The protein localises to the cell membrane. This is Putative ammonium transporter sll0537 from Synechocystis sp. (strain ATCC 27184 / PCC 6803 / Kazusa).